Reading from the N-terminus, the 943-residue chain is Protein translocase subunit SecA (943 aa).

ATP is bound by residues Gln90, 108-112 (GEGKT), and Asp509. Positions 535–562 (PDNEHKPPIPKQRNSKSKGGFSRKAGSN) are disordered.

It belongs to the SecA family. As to quaternary structure, monomer and homodimer. Part of the essential Sec protein translocation apparatus which comprises SecA, SecYEG and auxiliary proteins SecDF. Other proteins may also be involved.

The protein resides in the cell inner membrane. The protein localises to the cellular thylakoid membrane. It localises to the cytoplasm. It carries out the reaction ATP + H2O + cellular proteinSide 1 = ADP + phosphate + cellular proteinSide 2.. In terms of biological role, part of the Sec protein translocase complex. Interacts with the SecYEG preprotein conducting channel. Has a central role in coupling the hydrolysis of ATP to the transfer of proteins into and across the cell membrane, serving as an ATP-driven molecular motor driving the stepwise translocation of polypeptide chains across the membrane. Functionally, probably participates in protein translocation into and across both the cytoplasmic and thylakoid membranes in cyanobacterial cells. This Prochlorococcus marinus (strain AS9601) protein is Protein translocase subunit SecA.